The sequence spans 302 residues: 4-hydroxy-tetrahydrodipicolinate synthase (302 aa).

T57 serves as a coordination point for pyruvate. Catalysis depends on Y145, which acts as the Proton donor/acceptor. K173 functions as the Schiff-base intermediate with substrate in the catalytic mechanism. I213 serves as a coordination point for pyruvate.

The protein belongs to the DapA family. In terms of assembly, homotetramer; dimer of dimers.

It localises to the cytoplasm. The catalysed reaction is L-aspartate 4-semialdehyde + pyruvate = (2S,4S)-4-hydroxy-2,3,4,5-tetrahydrodipicolinate + H2O + H(+). Its pathway is amino-acid biosynthesis; L-lysine biosynthesis via DAP pathway; (S)-tetrahydrodipicolinate from L-aspartate: step 3/4. In terms of biological role, catalyzes the condensation of (S)-aspartate-beta-semialdehyde [(S)-ASA] and pyruvate to 4-hydroxy-tetrahydrodipicolinate (HTPA). The protein is 4-hydroxy-tetrahydrodipicolinate synthase of Corynebacterium aurimucosum (strain ATCC 700975 / DSM 44827 / CIP 107346 / CN-1) (Corynebacterium nigricans).